The primary structure comprises 1251 residues: Phospholipid-transporting ATPase IC (1251 aa).

The interval 1–52 is disordered; it reads MSTERDSETTFDEESQPNDEVVPYSDDETEDELEDQGSTVEPEQNRVNREAE. Residues 1–121 are Cytoplasmic-facing; it reads MSTERDSETT…LFEQFKRAAN (121 aa). The span at 25–35 shows a compositional bias: acidic residues; sequence SDDETEDELED. Over residues 43–52 the composition is skewed to basic and acidic residues; the sequence is EQNRVNREAE. The helical transmembrane segment at 122 to 142 threads the bilayer; it reads FYFLILLILQAIPQISTLAWY. Residues 143 to 144 lie on the Exoplasmic loop side of the membrane; sequence TT. A helical transmembrane segment spans residues 145 to 165; the sequence is LVPLLLVLGITAIKDLVDDVA. The Cytoplasmic portion of the chain corresponds to 166 to 339; sequence RHKMDKEINN…RTKIDYLMNY (174 aa). The helical transmembrane segment at 340–360 threads the bilayer; sequence MVYTIFIVLILVSAGLAIGHA. The Exoplasmic loop segment spans residues 361-385; sequence YWEAQVGNYSWYLYDGENATPSYRG. Residues 386-406 traverse the membrane as a helical segment; that stretch reads FLNFWGYIIVLNTMVPISLYV. At 407-952 the chain is on the cytoplasmic side; that stretch reads SVEVIRLGQS…SYIRMCKFLR (546 aa). The 4-aspartylphosphate intermediate role is filled by Asp454. Residues Asp454, Lys455, Thr456, Glu555, Phe596, Lys619, Arg652, Thr732, Gly733, Asp734, Arg867, and Lys873 each coordinate ATP. Residue Asp454 coordinates Mg(2+). Thr456 lines the Mg(2+) pocket. Asp893 lines the Mg(2+) pocket. The ATP site is built by Asn896 and Asp897. Asp897 serves as a coordination point for Mg(2+). Residues 953–973 traverse the membrane as a helical segment; the sequence is YFFYKNFAFTLVHFWYSFFNG. Residues 974–982 are Exoplasmic loop-facing; sequence YSAQTAYED. Residues 983–1003 traverse the membrane as a helical segment; sequence WFITLYNVLYSSLPVLLMGLL. Residues 1004-1032 are Cytoplasmic-facing; sequence DQDVSDKLSLRFPGLYVVGQRDLLFNYKR. The helical transmembrane segment at 1033–1053 threads the bilayer; sequence FFVSLLHGVLTSMVLFFIPLG. Residues 1054 to 1071 lie on the Exoplasmic loop side of the membrane; it reads AYLQTVGQDGEAPSDYQS. A helical transmembrane segment spans residues 1072–1092; it reads FAVTVASALVITVNFQIGLDT. The Cytoplasmic portion of the chain corresponds to 1093–1094; that stretch reads SY. Residues 1095–1115 traverse the membrane as a helical segment; the sequence is WTFVNAFSIFGSIALYFGIMF. Topologically, residues 1116–1142 are exoplasmic loop; the sequence is DFHSAGIHVLFPSAFQFTGTASNALRQ. Residues 1143–1163 traverse the membrane as a helical segment; sequence PYIWLTIILTVAVCLLPVVAI. Over 1164–1251 the chain is Cytoplasmic; the sequence is RFLSMTIWPS…TAEYRRTVES (88 aa). Ser1223 carries the post-translational modification Phosphoserine.

This sequence belongs to the cation transport ATPase (P-type) (TC 3.A.3) family. Type IV subfamily. Component of a P4-ATPase flippase complex which consists of a catalytic alpha subunit ATP8B1 and an accessory beta subunit TMEM30A. The flippase ATP8B1:TMEM30A complex can form an intermediate phosphoenzyme in vitro. Also interacts with beta subunit TMEM30B. Mg(2+) is required as a cofactor. Hepatocytes, bile duct, intestinal epithelial cells (cholangiocytes and ileocytes), and pancreatic acinar cells.

Its subcellular location is the cell membrane. The protein localises to the apical cell membrane. The protein resides in the cell projection. It is found in the stereocilium. It localises to the endoplasmic reticulum. Its subcellular location is the golgi apparatus. The enzyme catalyses ATP + H2O + phospholipidSide 1 = ADP + phosphate + phospholipidSide 2.. It catalyses the reaction a 1,2-diacyl-sn-glycero-3-phosphocholine(out) + ATP + H2O = a 1,2-diacyl-sn-glycero-3-phosphocholine(in) + ADP + phosphate + H(+). The catalysed reaction is a 1,2-diacyl-sn-glycero-3-phospho-L-serine(out) + ATP + H2O = a 1,2-diacyl-sn-glycero-3-phospho-L-serine(in) + ADP + phosphate + H(+). Its function is as follows. Catalytic component of a P4-ATPase flippase complex which catalyzes the hydrolysis of ATP coupled to the transport of phospholipids, in particular phosphatidylcholines (PC), from the outer to the inner leaflet of the plasma membrane. May participate in the establishment of the canalicular membrane integrity by ensuring asymmetric distribution of phospholipids in the canicular membrane. Thus may have a role in the regulation of bile acids transport into the canaliculus, uptake of bile acids from intestinal contents into intestinal mucosa or both and protect hepatocytes from bile salts. Involved in the microvillus formation in polarized epithelial cells; the function seems to be independent from its flippase activity. Participates in correct apical membrane localization of CDC42, CFTR and SLC10A2. Enables CDC42 clustering at the apical membrane during enterocyte polarization through the interaction between CDC42 polybasic region and negatively charged membrane lipids provided by ATP8B1. Together with TMEM30A is involved in uptake of the synthetic drug alkylphospholipid perifosine. Required for the preservation of cochlear hair cells in the inner ear. According PubMed:20852622 is proposed to act as cardiolipin transporter during inflammatory injury; the function is questioned by PubMed:21475228. The sequence is that of Phospholipid-transporting ATPase IC from Mus musculus (Mouse).